Consider the following 389-residue polypeptide: Sulfate adenylyltransferase (389 aa).

Belongs to the sulfate adenylyltransferase family.

It carries out the reaction sulfate + ATP + H(+) = adenosine 5'-phosphosulfate + diphosphate. The protein operates within sulfur metabolism; hydrogen sulfide biosynthesis; sulfite from sulfate: step 1/3. The chain is Sulfate adenylyltransferase from Deinococcus deserti (strain DSM 17065 / CIP 109153 / LMG 22923 / VCD115).